The following is a 403-amino-acid chain: ATP phosphoribosyltransferase regulatory subunit (403 aa).

This sequence belongs to the class-II aminoacyl-tRNA synthetase family. HisZ subfamily. As to quaternary structure, heteromultimer composed of HisG and HisZ subunits.

It localises to the cytoplasm. It participates in amino-acid biosynthesis; L-histidine biosynthesis; L-histidine from 5-phospho-alpha-D-ribose 1-diphosphate: step 1/9. Its function is as follows. Required for the first step of histidine biosynthesis. May allow the feedback regulation of ATP phosphoribosyltransferase activity by histidine. The protein is ATP phosphoribosyltransferase regulatory subunit of Crocosphaera subtropica (strain ATCC 51142 / BH68) (Cyanothece sp. (strain ATCC 51142)).